The primary structure comprises 201 residues: tRNA (guanine-N(7)-)-methyltransferase (201 aa).

Positions 33, 58, 85, and 108 each coordinate S-adenosyl-L-methionine. Aspartate 108 is a catalytic residue. Lysine 112 and aspartate 144 together coordinate substrate.

The protein belongs to the class I-like SAM-binding methyltransferase superfamily. TrmB family.

It carries out the reaction guanosine(46) in tRNA + S-adenosyl-L-methionine = N(7)-methylguanosine(46) in tRNA + S-adenosyl-L-homocysteine. It functions in the pathway tRNA modification; N(7)-methylguanine-tRNA biosynthesis. Functionally, catalyzes the formation of N(7)-methylguanine at position 46 (m7G46) in tRNA. This is tRNA (guanine-N(7)-)-methyltransferase from Anaeromyxobacter dehalogenans (strain 2CP-C).